The chain runs to 453 residues: Exodeoxyribonuclease 7 large subunit (453 aa).

The protein belongs to the XseA family. As to quaternary structure, heterooligomer composed of large and small subunits.

It is found in the cytoplasm. It carries out the reaction Exonucleolytic cleavage in either 5'- to 3'- or 3'- to 5'-direction to yield nucleoside 5'-phosphates.. In terms of biological role, bidirectionally degrades single-stranded DNA into large acid-insoluble oligonucleotides, which are then degraded further into small acid-soluble oligonucleotides. This Rickettsia typhi (strain ATCC VR-144 / Wilmington) protein is Exodeoxyribonuclease 7 large subunit.